Here is a 460-residue protein sequence, read N- to C-terminus: MATGKIIQVIGAVVDVEFPQDAVPKVYNALEVKGGATKLVLEVQQQLGGGVVRCIAMGSSDGLRRGLDVEDQNHPIEVPVGKATLGRIMNVLGDPVDMKGEIGEEERWAIHRAAPSYEDLSNSQELLETGIKVIDLICPFAKGGKVGLFGGAGVGKTVNMMELIRNIAIEHSGYSVFAGVGERTREGNDFYHEMTDSNVLDKVSLVYGQMNEPPGNRLRVALTGLTMAEKFRDEGRDVLLFIDNIYRYTLAGTEVSALLGRMPSAVGYQPTLAEEMGVLQERITSTKTGSITSVQAVYVPADDLTDPSPATTFAHLDATVVLSRQIASLGIYPAVDPLDSTSRQLDPLVVGQEHYDTARGVQSILQRYQELKDIIAILGMDELSEEDKLVVARARKIQRFLSQPFFVAEVFTGSPGKYVSLKDTIMGFKGIMNGDYDHLPEQAFYMVGSIDEAVEKAKKL.

150-157 (GGAGVGKT) is a binding site for ATP.

The protein belongs to the ATPase alpha/beta chains family. In terms of assembly, F-type ATPases have 2 components, CF(1) - the catalytic core - and CF(0) - the membrane proton channel. CF(1) has five subunits: alpha(3), beta(3), gamma(1), delta(1), epsilon(1). CF(0) has three main subunits: a(1), b(2) and c(9-12). The alpha and beta chains form an alternating ring which encloses part of the gamma chain. CF(1) is attached to CF(0) by a central stalk formed by the gamma and epsilon chains, while a peripheral stalk is formed by the delta and b chains.

The protein resides in the cell inner membrane. The catalysed reaction is ATP + H2O + 4 H(+)(in) = ADP + phosphate + 5 H(+)(out). Its function is as follows. Produces ATP from ADP in the presence of a proton gradient across the membrane. The catalytic sites are hosted primarily by the beta subunits. The chain is ATP synthase subunit beta from Edwardsiella ictaluri (strain 93-146).